The primary structure comprises 881 residues: DNA replication helicase (881 aa).

Positions 1-26 (MAASGGEGSRDVRAPGPPPQQPGARP) are disordered. Position 96 to 103 (96 to 103 (GNAGSGKS)) interacts with ATP.

This sequence belongs to the herpesviridae helicase family. Associates with the primase and the primase-associated factor to form the helicase-primase complex.

It localises to the host nucleus. Its function is as follows. Component of the helicase/primase complex. Unwinds the DNA at the replication forks and generates single-stranded DNA for both leading and lagging strand synthesis. The primase synthesizes short RNA primers on the lagging strand that the polymerase elongates using dNTPs. Possesses helicase-like motifs and therefore may act as the helicase subunit of the complex. The protein is DNA replication helicase of Human herpesvirus 2 (strain HG52) (HHV-2).